Consider the following 167-residue polypeptide: Probable host range protein 2 (167 aa).

The protein belongs to the poxviridae C7 protein family.

Plays a role for multiplication of the virus in different cell types. This Yaba monkey tumor virus (strain VR587) (YMTV) protein is Probable host range protein 2.